A 948-amino-acid polypeptide reads, in one-letter code: Sensor histidine kinase RcsC (948 aa).

The Cytoplasmic portion of the chain corresponds to methionine 1–alanine 20. A helical membrane pass occupies residues leucine 21–leucine 41. At histidine 42–arginine 313 the chain is on the periplasmic side. A helical transmembrane segment spans residues isoleucine 314 to alanine 334. At arginine 335 to alanine 948 the chain is on the cytoplasmic side. The 69-residue stretch at glutamine 357 to glutamine 425 folds into the PAS domain. A Histidine kinase domain is found at threonine 476 to glycine 692. Histidine 479 carries the phosphohistidine; by autocatalysis modification. The 101-residue stretch at alanine 705–serine 805 folds into the ABL domain. The Response regulatory domain maps to methionine 826 to alanine 940. Aspartate 875 is subject to 4-aspartylphosphate.

Belongs to the RcsC family. Interacts with RcsD. Autophosphorylated. Activation probably requires a transfer of a phosphate group from a His in the transmitter domain to an Asp in the receiver domain.

Its subcellular location is the cell inner membrane. The catalysed reaction is ATP + protein L-histidine = ADP + protein N-phospho-L-histidine.. Functionally, component of the Rcs signaling system, which controls transcription of numerous genes. RcsC functions as a membrane-associated protein kinase that phosphorylates RcsD in response to environmental signals. The phosphoryl group is then transferred to the response regulator RcsB. In Salmonella typhi, this protein is Sensor histidine kinase RcsC.